A 113-amino-acid polypeptide reads, in one-letter code: MSMAEYKGKVKNIQDTPFGYTLSLIGGKWKMVIIYLLAEDQPIRFKELKRQIGTITYKTLSSQLKELEADGLVKRKEYPQVPPKVEYSLTDKAGTLLPILEELCEWGVKNQNN.

In terms of domain architecture, HTH hxlR-type spans 16–113 (TPFGYTLSLI…CEWGVKNQNN (98 aa)).

This is an uncharacterized protein from Halalkalibacterium halodurans (strain ATCC BAA-125 / DSM 18197 / FERM 7344 / JCM 9153 / C-125) (Bacillus halodurans).